The sequence spans 52 residues: Insulin (52 aa).

Disulfide bonds link cysteine 7/cysteine 38, cysteine 19/cysteine 51, and cysteine 37/cysteine 42.

The protein belongs to the insulin family. As to quaternary structure, heterodimer of a B chain and an A chain linked by two disulfide bonds.

It localises to the secreted. Functionally, insulin decreases blood glucose concentration. It increases cell permeability to monosaccharides, amino acids and fatty acids. It accelerates glycolysis, the pentose phosphate cycle, and glycogen synthesis in liver. This Acipenser gueldenstaedtii (Russian sturgeon) protein is Insulin (ins).